The sequence spans 388 residues: 4-hydroxy-tetrahydrodipicolinate synthase 1, chloroplastic (388 aa).

Positions 1 to 51 (MPYLQPPRPHPHPHPTSRLSRASPPSPFPFFPAGTSRSGRLQPVPVSGHSA) are disordered. The transit peptide at 1–62 (MPYLQPPRPH…RVSKGKFAVA (62 aa)) directs the protein to the chloroplast. T131 serves as a coordination point for pyruvate. Y217 serves as the catalytic Proton donor/acceptor. K245 serves as the catalytic Schiff-base intermediate with substrate. Residue I284 participates in pyruvate binding.

Belongs to the DapA family. Tetramer of modified subunits derived from two genes in different combinations.

It is found in the plastid. Its subcellular location is the chloroplast. It carries out the reaction L-aspartate 4-semialdehyde + pyruvate = (2S,4S)-4-hydroxy-2,3,4,5-tetrahydrodipicolinate + H2O + H(+). It functions in the pathway amino-acid biosynthesis; L-lysine biosynthesis via DAP pathway; (S)-tetrahydrodipicolinate from L-aspartate: step 3/4. Its activity is regulated as follows. Sensitive to lysine inhibition. This inhibition increase in an allosteric manner with increasing concentration of the inhibitor. Catalyzes the condensation of (S)-aspartate-beta-semialdehyde [(S)-ASA] and pyruvate to 4-hydroxy-tetrahydrodipicolinate (HTPA). In Triticum aestivum (Wheat), this protein is 4-hydroxy-tetrahydrodipicolinate synthase 1, chloroplastic.